The primary structure comprises 84 residues: Putative membrane protein insertion efficiency factor (84 aa).

The interval tryptophan 60–histidine 84 is disordered. Over residues valine 68 to histidine 84 the composition is skewed to basic and acidic residues.

This sequence belongs to the UPF0161 family.

The protein localises to the cell membrane. In terms of biological role, could be involved in insertion of integral membrane proteins into the membrane. This Streptococcus gordonii (strain Challis / ATCC 35105 / BCRC 15272 / CH1 / DL1 / V288) protein is Putative membrane protein insertion efficiency factor.